The following is a 609-amino-acid chain: MPAAVDTAKTISKKRKRKHGGSAREATDNGVATSPAENGVEGKATETTTELTKDKDVELAKKVVKEEAQKKRKVSHSPSDEEESESEDEEKKEEDEKDNVKEDSGKANVPDLPSVDAVSLPQPDGGPKKFTELGLSEKTLQGIKEMGFETMTEIQQRTIPPLLAGRDVLGAAKTGSGKTLAFLIPAIEMLSALRFKPRNGTGVIVVSPTRELALQIFGVARELLTAHSQTYGIVIGGANRRAEAEKLTKGVNLLIATPGRLLDHLQNTPGFVFKNLKTLVIDEADRILEVGFEDEMRQIIKILPNEDRQTMLFSATQTTKVEDLARISLRPGPLYINVDHRKEHSTVEGLEQGYVICEADKRFLLLFSFLKRNLKKKIIVFFSSCNCVKYHAELLNYIDLPVLDLHGKQKQQKRTNTFFEFCNAKQGVLICTDVAARGLDIPAVDWIIQFDPPDDTRDYIHRVGRTARGANGRGRSLMFLQPSEVGFLKYLKEARVPVVEFDFPAKKIVNVQSQLEKLISQNYYLNKSAKDGYRSYLQAYASHSLRSVFDVHKLDLVKVAKSFGFSTPPRIDIQLGSSLSRDKKQQQQGRRSYGSQPKGLKFKRKHEDD.

A disordered region spans residues 1-131 (MPAAVDTAKT…QPDGGPKKFT (131 aa)). A compositionally biased stretch (basic residues) spans 11-21 (ISKKRKRKHGG). A compositionally biased stretch (basic and acidic residues) spans 51–69 (LTKDKDVELAKKVVKEEAQ). The span at 80 to 97 (DEEESESEDEEKKEEDEK) shows a compositional bias: acidic residues. The Q motif signature appears at 128 to 156 (KKFTELGLSEKTLQGIKEMGFETMTEIQQ). Residues 159–335 (IPPLLAGRDV…RISLRPGPLY (177 aa)) form the Helicase ATP-binding domain. 172-179 (AKTGSGKT) contributes to the ATP binding site. The short motif at 282–285 (DEAD) is the DEAD box element. One can recognise a Helicase C-terminal domain in the interval 349-519 (GLEQGYVICE…NVQSQLEKLI (171 aa)). The Bipartite nuclear localization signal motif lies at 361 to 377 (KRFLLLFSFLKRNLKKK). Residues 576–609 (GSSLSRDKKQQQQGRRSYGSQPKGLKFKRKHEDD) form a disordered region. The span at 586-596 (QQQGRRSYGSQ) shows a compositional bias: low complexity. Basic residues predominate over residues 600 to 609 (LKFKRKHEDD).

The protein belongs to the DEAD box helicase family. DDX18/HAS1 subfamily. In terms of assembly, associates in the nucleolus with the 60S and pre-60S ribosomal subunits.

The protein localises to the nucleus. It is found in the nucleolus. The catalysed reaction is ATP + H2O = ADP + phosphate + H(+). ATP-dependent RNA helicase involved in 40S ribosomal subunit biogenesis. Required for the processing and cleavage of 35S pre-rRNA at sites A0, A1, and A2, leading to mature 18S rRNA. The polypeptide is ATP-dependent RNA helicase has1 (has1) (Emericella nidulans (strain FGSC A4 / ATCC 38163 / CBS 112.46 / NRRL 194 / M139) (Aspergillus nidulans)).